A 347-amino-acid chain; its full sequence is tRNA N6-adenosine threonylcarbamoyltransferase (347 aa).

Positions 115 and 119 each coordinate Fe cation. Residues 137–141 (LASGG), Asp-170, Gly-183, and Asn-281 contribute to the substrate site. Asp-309 is a binding site for Fe cation.

It belongs to the KAE1 / TsaD family. Fe(2+) is required as a cofactor.

The protein resides in the cytoplasm. The enzyme catalyses L-threonylcarbamoyladenylate + adenosine(37) in tRNA = N(6)-L-threonylcarbamoyladenosine(37) in tRNA + AMP + H(+). In terms of biological role, required for the formation of a threonylcarbamoyl group on adenosine at position 37 (t(6)A37) in tRNAs that read codons beginning with adenine. Is involved in the transfer of the threonylcarbamoyl moiety of threonylcarbamoyl-AMP (TC-AMP) to the N6 group of A37, together with TsaE and TsaB. TsaD likely plays a direct catalytic role in this reaction. This Methylorubrum populi (strain ATCC BAA-705 / NCIMB 13946 / BJ001) (Methylobacterium populi) protein is tRNA N6-adenosine threonylcarbamoyltransferase.